Consider the following 243-residue polypeptide: Probable transcriptional regulator ycf27 (243 aa).

Positions 7–120 (KILVVDDEAS…ELEARIRSVL (114 aa)) constitute a Response regulatory domain. A 4-aspartylphosphate modification is found at Asp56. A DNA-binding region (H-T-H motif) is located at residues 76–94 (DVPIIMLTALGEVCDRITG). Positions 135-236 (SGIISIGFLK…ARGTGYLFQR (102 aa)) form a DNA-binding region, ompR/PhoB-type.

It localises to the plastid. The protein localises to the chloroplast. In terms of biological role, probable promoter-specific protein mediating the interaction between DNA and RNA polymerase. In Porphyra purpurea (Red seaweed), this protein is Probable transcriptional regulator ycf27 (ycf27).